Here is a 115-residue protein sequence, read N- to C-terminus: Regulator of ribonuclease activity B (115 aa).

It belongs to the RraB family. As to quaternary structure, interacts with the C-terminal region of Rne.

It is found in the cytoplasm. Functionally, globally modulates RNA abundance by binding to RNase E (Rne) and regulating its endonucleolytic activity. Can modulate Rne action in a substrate-dependent manner by altering the composition of the degradosome. This is Regulator of ribonuclease activity B from Aeromonas salmonicida (strain A449).